A 286-amino-acid polypeptide reads, in one-letter code: MDQPMKPKTCSESDFADDSSASSSSSSGQNLRGAEMVVEVKKEAVCSQKAEREKLRRDKLKEQFLELGNALDPNRPKSDKASVLTDTIQMLKDVMNQVDRLKAEYETLSQESRELIQEKSELREEKATLKSDIEILNAQYQHRIKTMVPWVPHYSYHIPFVAITQGQSSFIPYSASVNPLTEQQASVQQHSSSSADASMKQDSKIKPLDLDLMMNSNHSGQGNDQKDDVRLKLELKIHASSLAQQDVSGKEKKVSLTTTASSSNSYSLSQAVQDSSPGTVNDMLKP.

The segment at 1 to 34 (MDQPMKPKTCSESDFADDSSASSSSSSGQNLRGA) is disordered. The span at 18-27 (DSSASSSSSS) shows a compositional bias: low complexity. The region spanning 44–94 (AVCSQKAEREKLRRDKLKEQFLELGNALDPNRPKSDKASVLTDTIQMLKDV) is the bHLH domain. Disordered stretches follow at residues 182-202 (EQQASVQQHSSSSADASMKQD) and 244-286 (QQDV…MLKP). 2 stretches are compositionally biased toward low complexity: residues 183 to 198 (QQASVQQHSSSSADAS) and 255 to 269 (SLTTTASSSNSYSLS). Positions 270-279 (QAVQDSSPGT) are enriched in polar residues.

As to quaternary structure, homodimer. In terms of tissue distribution, expressed consitutively in roots, leaves, stems, and flowers.

It is found in the nucleus. The polypeptide is Transcription factor bHLH11 (BHLH11) (Arabidopsis thaliana (Mouse-ear cress)).